Consider the following 451-residue polypeptide: Trimethylamine monooxygenase (451 aa).

Residues S12, E37, Q39, L45, W46, and H62 each coordinate FAD. Residues W70 and N72 each coordinate NADP(+). Positions 72 and 125 each coordinate FAD. NADP(+) contacts are provided by S204, S205, S207, and R228. Positions 317 and 320 each coordinate FAD. NADP(+) is bound at residue R411.

The protein belongs to the FMO family. The cofactor is FAD.

It carries out the reaction trimethylamine + NADPH + O2 = trimethylamine N-oxide + NADP(+) + H2O. In terms of biological role, catalyzes the oxidation of trimethylamine (TMA) to produce trimethylamine N-oxide (TMAO). In vitro, has a broad substrate specificity, oxidizing many nitrogen- and sulfur-containing compounds, including dimethylamine (DMA), dimethylsulfide (DMS), dimethylsulfoxide (DMSO), cysteamine, methimazole and dimethylaniline. The polypeptide is Trimethylamine monooxygenase (Methylocella silvestris (strain DSM 15510 / CIP 108128 / LMG 27833 / NCIMB 13906 / BL2)).